The following is a 67-amino-acid chain: ATP synthase protein 8 (67 aa).

The helical transmembrane segment at 8–24 (TWFITILATILTLFIIM) threads the bilayer. Residue Lys-54 is modified to N6-acetyllysine; alternate. At Lys-54 the chain carries N6-succinyllysine; alternate. The residue at position 57 (Lys-57) is an N6-acetyllysine.

This sequence belongs to the ATPase protein 8 family. F-type ATPases have 2 components, CF(1) - the catalytic core - and CF(0) - the membrane proton channel. Component of an ATP synthase complex composed of ATP5PB, ATP5MC1, ATP5F1E, ATP5PD, ATP5ME, ATP5PF, ATP5MF, MT-ATP6, MT-ATP8, ATP5F1A, ATP5F1B, ATP5F1D, ATP5F1C, ATP5PO, ATP5MG, ATP5MK and ATP5MJ. Interacts with PRICKLE3.

Its subcellular location is the mitochondrion membrane. Mitochondrial membrane ATP synthase (F(1)F(0) ATP synthase or Complex V) produces ATP from ADP in the presence of a proton gradient across the membrane which is generated by electron transport complexes of the respiratory chain. F-type ATPases consist of two structural domains, F(1) - containing the extramembraneous catalytic core and F(0) - containing the membrane proton channel, linked together by a central stalk and a peripheral stalk. During catalysis, ATP synthesis in the catalytic domain of F(1) is coupled via a rotary mechanism of the central stalk subunits to proton translocation. Part of the complex F(0) domain. Minor subunit located with subunit a in the membrane. The chain is ATP synthase protein 8 (MT-ATP8) from Artibeus jamaicensis (Jamaican fruit-eating bat).